The primary structure comprises 100 residues: Replication restart protein PriB (100 aa).

In terms of domain architecture, SSB spans 1–100 (MTNRMELSGT…VLHADDIIHI (100 aa)).

The protein belongs to the PriB family. Homodimer. Interacts with PriA and DnaT. Component of the replication restart primosome. Primosome assembly occurs via a 'hand-off' mechanism. PriA binds to replication forks, subsequently PriB then DnaT bind; DnaT then displaces ssDNA to generate the helicase loading substrate.

Involved in the restart of stalled replication forks, which reloads the replicative helicase on sites other than the origin of replication; the PriA-PriB pathway is the major replication restart pathway. During primosome assembly it facilitates complex formation between PriA and DnaT on DNA; stabilizes PriA on DNA. Stimulates the DNA unwinding activity of PriA helicase. This chain is Replication restart protein PriB, found in Vibrio vulnificus (strain CMCP6).